The primary structure comprises 327 residues: GTPase Obg (327 aa).

An Obg domain is found at 1 to 159; it reads MKFLDQVKIY…YVIWLQLKTI (159 aa). The region spanning 160-327 is the OBG-type G domain; the sequence is ADVGIVGLPN…IKAKLLSYVS (168 aa). Residues 166 to 173, 191 to 195, 212 to 215, 279 to 282, and 308 to 310 contribute to the GTP site; these read GLPNAGKS, FTTLN, DIPG, NKTD, and STL. 2 residues coordinate Mg(2+): serine 173 and threonine 193.

Belongs to the TRAFAC class OBG-HflX-like GTPase superfamily. OBG GTPase family. Monomer. Requires Mg(2+) as cofactor.

The protein resides in the cytoplasm. Functionally, an essential GTPase which binds GTP, GDP and possibly (p)ppGpp with moderate affinity, with high nucleotide exchange rates and a fairly low GTP hydrolysis rate. Plays a role in control of the cell cycle, stress response, ribosome biogenesis and in those bacteria that undergo differentiation, in morphogenesis control. This Pelagibacter ubique (strain HTCC1062) protein is GTPase Obg.